A 676-amino-acid polypeptide reads, in one-letter code: Multisubstrate pseudouridine synthase 7 (676 aa).

Disordered regions lie at residues 1–27 and 87–110; these read MSDS…AKKL and KMPK…AARR. Serine 2 carries the post-translational modification N-acetylserine. Positions 94–110 are enriched in basic and acidic residues; sequence RSKEEVNAEKESEAARR. The Nucleophile role is filled by aspartate 256. The 245-residue stretch at 338–582 folds into the TRUD domain; it reads GFINYFGMQR…AGSYRTVIQK (245 aa).

Belongs to the pseudouridine synthase TruD family.

It localises to the nucleus. It is found in the cytoplasm. It carries out the reaction uridine in 5S rRNA = pseudouridine in 5S rRNA. The enzyme catalyses uridine in snRNA = pseudouridine in snRNA. It catalyses the reaction uridine(13) in tRNA = pseudouridine(13) in tRNA. The catalysed reaction is a uridine in mRNA = a pseudouridine in mRNA. In terms of biological role, catalyzes pseudouridylation at position 35 in U2 snRNA stem-loop II region which induces particular conformation of the mRNA-U2 snRNA duplex and places the nucleophile in an accessible position for the first step of splicing. Also catalyzes pseudouridylation at position 56 in U2 snRNA. Also catalyzes pseudouridylation at position 50 in 5S rRNA, position 13 in cytoplasmic tRNAs, and position 35 in pre-tRNA(Tyr). Pseudouridine residues in tRNAs may stabilize the local RNA conformation, favor interactions with protein partners and play an important role in the stabilization of the codon-anticodon interaction with mRNA. Also catalyzes pseudouridylation of mRNAs in response to heat shock: mediates pseudouridylation of mRNAs with the consensus sequence 5'-UGUAR-3'. The protein is Multisubstrate pseudouridine synthase 7 of Saccharomyces cerevisiae (strain ATCC 204508 / S288c) (Baker's yeast).